A 445-amino-acid polypeptide reads, in one-letter code: CBL-interacting protein kinase 3 (445 aa).

The region spanning 19 to 274 is the Protein kinase domain; the sequence is YELGRAIGQG…TSQVLQDQWF (256 aa). ATP is bound by residues 25-33 and Lys-48; that span reads IGQGTFAKV. Asp-142 acts as the Proton acceptor in catalysis. Positions 160 to 189 are activation loop; the sequence is DFGLSAISEQVKADGLLHTTCGTPNYVAPE. Residues 309–336 enclose the NAF domain; that stretch reads AMEEQPTLMNAFELISLNKGLNLDNFFE. Residues 342-371 form a PPI region; sequence KRETRFTSQCPPKEIINRIEEAANLLGFNI.

It belongs to the protein kinase superfamily. CAMK Ser/Thr protein kinase family. SNF1 subfamily. It depends on Mn(2+) as a cofactor.

It catalyses the reaction L-seryl-[protein] + ATP = O-phospho-L-seryl-[protein] + ADP + H(+). It carries out the reaction L-threonyl-[protein] + ATP = O-phospho-L-threonyl-[protein] + ADP + H(+). CIPK serine-threonine protein kinases interact with CBL proteins. Binding of a CBL protein to the regulatory NAF domain of CIPK protein lead to the activation of the kinase in a calcium-dependent manner. The sequence is that of CBL-interacting protein kinase 3 (CIPK3) from Oryza sativa subsp. japonica (Rice).